The primary structure comprises 364 residues: Uroporphyrinogen decarboxylase (364 aa).

Residues 28–32 (RQAGR), Asp-78, Tyr-160, Thr-215, and His-333 each bind substrate.

This sequence belongs to the uroporphyrinogen decarboxylase family. As to quaternary structure, homodimer.

It is found in the cytoplasm. The enzyme catalyses uroporphyrinogen III + 4 H(+) = coproporphyrinogen III + 4 CO2. Its pathway is porphyrin-containing compound metabolism; protoporphyrin-IX biosynthesis; coproporphyrinogen-III from 5-aminolevulinate: step 4/4. Catalyzes the decarboxylation of four acetate groups of uroporphyrinogen-III to yield coproporphyrinogen-III. This is Uroporphyrinogen decarboxylase from Burkholderia cenocepacia (strain ATCC BAA-245 / DSM 16553 / LMG 16656 / NCTC 13227 / J2315 / CF5610) (Burkholderia cepacia (strain J2315)).